Consider the following 203-residue polypeptide: Peptidyl-tRNA hydrolase (203 aa).

Residue Y26 participates in tRNA binding. The Proton acceptor role is filled by H31. Residues Y82, N84, and N130 each contribute to the tRNA site.

The protein belongs to the PTH family. Monomer.

The protein localises to the cytoplasm. The enzyme catalyses an N-acyl-L-alpha-aminoacyl-tRNA + H2O = an N-acyl-L-amino acid + a tRNA + H(+). In terms of biological role, hydrolyzes ribosome-free peptidyl-tRNAs (with 1 or more amino acids incorporated), which drop off the ribosome during protein synthesis, or as a result of ribosome stalling. Its function is as follows. Catalyzes the release of premature peptidyl moieties from peptidyl-tRNA molecules trapped in stalled 50S ribosomal subunits, and thus maintains levels of free tRNAs and 50S ribosomes. The protein is Peptidyl-tRNA hydrolase of Streptomyces avermitilis (strain ATCC 31267 / DSM 46492 / JCM 5070 / NBRC 14893 / NCIMB 12804 / NRRL 8165 / MA-4680).